Reading from the N-terminus, the 397-residue chain is DNA excision repair protein ERCC-8 (397 aa).

WD repeat units lie at residues 41-81 (IHGS…RQPH), 97-137 (VHKY…AADV), 184-224 (GHRQ…GCLL), 243-282 (AHNG…NTLV), and 332-371 (GHYK…PVPD). Residues S391, S392, and S393 each carry the phosphoserine modification.

As to quaternary structure, part of the CSA complex (also named DCX(ERCC8) complex), a DCX E3 ubiquitin-protein ligase complex containing ERCC8, RBX1, DDB1 and CUL4A; the CSA complex interacts with RNA polymerase II; upon UV irradiation it interacts with the COP9 signalosome and preferentially with the hyperphosphorylated form of RNA polymerase II. Interacts with ERCC6/CSB (via CIM motif); promoting recruitment to lesion-stalled RNA polymerase II (Pol II). Interacts with KIAA1530/UVSSA. Interacts with a subunit of RNA polymerase II TFIIH.

It is found in the nucleus. It localises to the chromosome. The protein resides in the nucleus matrix. The protein operates within protein modification; protein ubiquitination. In terms of biological role, substrate-recognition component of the CSA complex, a DCX (DDB1-CUL4-X-box) E3 ubiquitin-protein ligase complex, involved in transcription-coupled nucleotide excision repair (TC-NER), a process during which RNA polymerase II-blocking lesions are rapidly removed from the transcribed strand of active genes. Following recruitment to lesion-stalled RNA polymerase II (Pol II), the CSA complex mediates ubiquitination of Pol II subunit POLR2A/RPB1 at 'Lys-1268', a critical TC-NER checkpoint, governing RNA Pol II stability and initiating DNA damage excision by TFIIH recruitment. The CSA complex also promotes the ubiquitination and subsequent proteasomal degradation of ERCC6/CSB in a UV-dependent manner; ERCC6 degradation is essential for the recovery of RNA synthesis after transcription-coupled repair. Also plays a role in DNA double-strand breaks (DSSBs) repair by non-homologous end joining (NHEJ). This Mus musculus (Mouse) protein is DNA excision repair protein ERCC-8.